Reading from the N-terminus, the 296-residue chain is MNSNIYAVIVTYNPELKNLNALITELKEQNCYVVVVDNRTNFTLKDKLADIEKVHLICLGRNEGIAKAQNIGIRYSLEKGAEKIIFFDQDSRIRNEFIKKLSCYMDNENAKIAGPVFIDRDKSHYYPICNIKKNGLREKIHVTEGQTPFKSSVTISSGTMVSKEVFEIVGMMDEELFIDYVDTEWCLRCLNYGILVHIIPDIKMVHAIGDKSVKICGINIPIHSPVRRYYRVRNAFLLLRKNHVPLLLSIREVVFSLIHTTLIIATQKNKIEYMKKHILATLDGIRGITGGGRYNA.

It belongs to the glycosyltransferase 2 family.

It functions in the pathway bacterial outer membrane biogenesis; lipopolysaccharide biosynthesis. The polypeptide is dTDP-rhamnosyl transferase RfbF (rfbF) (Shigella flexneri).